The following is a 200-amino-acid chain: Synaptobrevin homolog YKT6 (200 aa).

Residues 7–129 (GVFRSGGEKA…LKMKQLDTYI (123 aa)) form the Longin domain. The v-SNARE coiled-coil homology domain occupies 140–200 (AIMKVQQELD…KKSNSCCIIM (61 aa)). A Phosphothreonine modification is found at T158. The S-palmitoyl cysteine moiety is linked to residue C196. Cysteine methyl ester is present on C197. C197 is lipidated: S-farnesyl cysteine. Residues 198 to 200 (IIM) constitute a propeptide, removed in mature form.

It belongs to the synaptobrevin family.

It is found in the cell membrane. In Saccharomyces cerevisiae (strain ATCC 204508 / S288c) (Baker's yeast), this protein is Synaptobrevin homolog YKT6 (YKT6).